Consider the following 731-residue polypeptide: DNA topoisomerase 1 (731 aa).

The 114-residue stretch at 17-130 (KHLVIVESPA…KRIVFNEITP (114 aa)) folds into the Toprim domain. The Mg(2+) site is built by glutamate 23 and aspartate 96. One can recognise a Topo IA-type catalytic domain in the interval 144 to 569 (DTAKVNAQKA…DFYPAFSEKV (426 aa)). The interaction with DNA stretch occupies residues 178–183 (SAGRVQ). Tyrosine 312 functions as the O-(5'-phospho-DNA)-tyrosine intermediate in the catalytic mechanism. 3 C4-type zinc fingers span residues 591-617 (CSQCGDTMVKKLGRFGFFLACGKFPEC), 628-657 (CPRPACDGNIVGKKTRGRKEFYGCTRFPVC), and 670-696 (CPQCRCFLVEKSNRRVGTYTACVNPEC).

It belongs to the type IA topoisomerase family. Monomer. The cofactor is Mg(2+).

It catalyses the reaction ATP-independent breakage of single-stranded DNA, followed by passage and rejoining.. Releases the supercoiling and torsional tension of DNA, which is introduced during the DNA replication and transcription, by transiently cleaving and rejoining one strand of the DNA duplex. Introduces a single-strand break via transesterification at a target site in duplex DNA. The scissile phosphodiester is attacked by the catalytic tyrosine of the enzyme, resulting in the formation of a DNA-(5'-phosphotyrosyl)-enzyme intermediate and the expulsion of a 3'-OH DNA strand. The free DNA strand then undergoes passage around the unbroken strand, thus removing DNA supercoils. Finally, in the religation step, the DNA 3'-OH attacks the covalent intermediate to expel the active-site tyrosine and restore the DNA phosphodiester backbone. This Treponema pallidum (strain Nichols) protein is DNA topoisomerase 1.